We begin with the raw amino-acid sequence, 535 residues long: MRSSVSRQTYSTKGGFSSNSASGGSGSQARTSFSSVTVSRSSGSGGGAHCGPGTGGFGSRSLYNLGGHKSISVSVAGGALLGRALGGFGFGSRAFMGQGAGRQTFGPACPPGGIQEVTVNQSLLTPLHVEIDPEIQRVRTQEREQIKTLNNKFASFIDKVRFLEQQNKVLETKWALLQEQGQNLGVTRNNLEPLFEAYLGSMRSTLDRLQSERGRLDSELRNVQDLVEDFKNKYEDEINKHTAAENEFVVLKKDVDAAYMGRMDLHGKVGTLTQEIDFLQQLYEMELSQVQTHVSNTNVVLSMDNNRNLDLDSIIAEVKAQYELIAQRSRAEAEAWYQTKYEELQVTAGKHGDNLRDTKNEIAELTRTIQRLQGEADAAKKQCQQLQTAIAEAEQRGELALKDAQKKLGDLDVALHQAKEDLTRLLRDYQELMNVKLALDVEIATYRKLLESEESRMSGECPSAVSISVTGNSTTVCGGGAASFGGGISLGGSGGATKGGFSTNVGYSTVKGGPVSAGTSILRKTTTVKTSSQRY.

Residues 1-12 (MRSSVSRQTYST) show a composition bias toward polar residues. The segment at 1-52 (MRSSVSRQTYSTKGGFSSNSASGGSGSQARTSFSSVTVSRSSGSGGGAHCGP) is disordered. Residues 1 to 141 (MRSSVSRQTY…DPEIQRVRTQ (141 aa)) are head. The span at 32-42 (SFSSVTVSRSS) shows a compositional bias: low complexity. Gly residues predominate over residues 43–52 (GSGGGAHCGP). A coil 1A region spans residues 142 to 177 (EREQIKTLNNKFASFIDKVRFLEQQNKVLETKWALL). Residues 142 to 457 (EREQIKTLNN…KLLESEESRM (316 aa)) form the IF rod domain. The tract at residues 178-198 (QEQGQNLGVTRNNLEPLFEAY) is linker 1. The coil 1B stretch occupies residues 199–290 (LGSMRSTLDR…QLYEMELSQV (92 aa)). Residues 291 to 314 (QTHVSNTNVVLSMDNNRNLDLDSI) form a linker 12 region. The tract at residues 315-453 (IAEVKAQYEL…ATYRKLLESE (139 aa)) is coil 2. Positions 454–535 (ESRMSGECPS…TTVKTSSQRY (82 aa)) are tail.

Belongs to the intermediate filament family. In terms of assembly, heterotetramer of two type I and two type II keratins. As to expression, expressed in skeletal muscle, skin and scalp, but not in any other tissues or organs examined.

The sequence is that of Keratin, type II cytoskeletal 79 (KRT79) from Homo sapiens (Human).